The sequence spans 83 residues: Small ribosomal subunit protein uS17 (83 aa).

Belongs to the universal ribosomal protein uS17 family. Part of the 30S ribosomal subunit.

Its function is as follows. One of the primary rRNA binding proteins, it binds specifically to the 5'-end of 16S ribosomal RNA. In Thermodesulfovibrio yellowstonii (strain ATCC 51303 / DSM 11347 / YP87), this protein is Small ribosomal subunit protein uS17.